The primary structure comprises 1597 residues: Rho guanine nucleotide exchange factor 5 (1597 aa).

Disordered stretches follow at residues 138 to 246 (PFSS…EGTL), 258 to 455 (EEQM…SLEP), and 467 to 1072 (GSFL…VFRE). Ser184 is subject to Phosphoserine. The segment covering 192–204 (ETNQNEGSESGTI) has biased composition (polar residues). Residues 217–237 (ESQGLLHPQEVQVLEEQGQQE) show a composition bias toward low complexity. Over residues 266 to 278 (NDEKGEQKQKQEQ) the composition is skewed to basic and acidic residues. Positions 299–309 (GLNDGEWEQED) are enriched in acidic residues. 2 stretches are compositionally biased toward basic and acidic residues: residues 323–368 (GEER…KEKG) and 394–404 (RSREEENEHHG). Polar residues predominate over residues 428 to 438 (LMTQIPGTQTE). Residues Ser445 and Ser450 each carry the phosphoserine modification. Over residues 474 to 490 (SPDKEIDQNSQQEESRL) the composition is skewed to basic and acidic residues. Positions 512-522 (PRTPDSAPPSP) are enriched in pro residues. Composition is skewed to polar residues over residues 583 to 601 (STGT…TVQH) and 655 to 682 (DYST…NLER). Residues 731–746 (QRRDTHPSVVETDGHA) are compositionally biased toward basic and acidic residues. 2 stretches are compositionally biased toward pro residues: residues 812–828 (PLPP…PPIS) and 838–856 (PLPP…PLPP). Arg866 is modified (asymmetric dimethylarginine). Residues 901-920 (ATARSTESFTSTSRSKSEVS) are compositionally biased toward low complexity. Polar residues predominate over residues 926–941 (SNMTNFLCPSSPTTPW). Positions 950 to 969 (SKDEAGVSEHPEAPAREPLR) are enriched in basic and acidic residues. Phosphoserine is present on residues Ser983, Ser1011, and Ser1044. A compositionally biased stretch (basic and acidic residues) spans 990–1012 (QPEKPSHLHLEKASSWPHRRDSG). Positions 1057 to 1072 (AVEKHPGPSDTVVFRE) are enriched in basic and acidic residues. Ser1126 carries the phosphoserine modification. In terms of domain architecture, DH spans 1174–1358 (KLQEVKFELI…EQLIRDCNNN (185 aa)). The 113-residue stretch at 1390 to 1502 (WLVKSGELTA…WISALAMPRE (113 aa)) folds into the PH domain. Residues 1510 to 1571 (YNSPQVQCLR…PVQQVEFISN (62 aa)) form the SH3 domain.

Interacts with SRC. Forms a ternary complex with SRC and the PI3K 85 kDa subunit. Interacts with and is activated by the heterodimer formed by GNB1 and GNG2. Interacts with ODAM (via C-terminus). Interacts with RHOA. In terms of processing, activation of SRC induces tyrosine phosphorylation of ARHGEF5. As to expression, ubiquitously expressed with highest levels in placenta. High levels are also found in colon, kidney, trachea, prostate, liver, pancreas, pituitary gland, thyroid gland and mammary gland. In fetal tissues, expressed at high levels in kidney, lung and liver. Expressed at low levels in lung and heart.

It localises to the cytoplasm. It is found in the nucleus. Its subcellular location is the cell projection. The protein localises to the podosome. Its function is as follows. Guanine nucleotide exchange factor which activates Rho GTPases. Strongly activates RHOA. Also strongly activates RHOB, weakly activates RHOC and RHOG and shows no effect on RHOD, RHOV, RHOQ or RAC1. Involved in regulation of cell shape and actin cytoskeletal organization. Plays a role in actin organization by generating a loss of actin stress fibers and the formation of membrane ruffles and filopodia. Required for SRC-induced podosome formation. Involved in positive regulation of immature dendritic cell migration. The polypeptide is Rho guanine nucleotide exchange factor 5 (ARHGEF5) (Homo sapiens (Human)).